A 301-amino-acid chain; its full sequence is Nucleosome assembly protein 1;3 (301 aa).

Residues 15–69 (VETLKNKLQALAEQHVDVLESLAPVVRKRVDVLIEIQSQHDELEAKFLEEKSALE) adopt a coiled-coil conformation. The Nuclear export signal motif lies at 36-51 (LAPVVRKRVDVLIEIQ). Residues 279 to 301 (EDYGASWVDDEEDDDDEYSDEEA) form a disordered region. Ser-297 carries the phosphoserine; by CK2 modification.

Belongs to the nucleosome assembly protein (NAP) family.

Its subcellular location is the nucleus. It is found in the cytoplasm. Functionally, may modulate chromatin structure by regulation of nucleosome assembly/disassembly. The chain is Nucleosome assembly protein 1;3 (NAP1;3) from Oryza sativa subsp. indica (Rice).